Consider the following 232-residue polypeptide: MSSFPNTVAEGRRSGKAPEKSTFSQTCSLLSQFLKEKRASADSTLGIGGKMEPKANTKALLGSLQNSDGALKLSASAMEFLPQLVENPCIKKSRSPGPESPQLTIFYAGKMLVFDAFPPEKATEVMEMATKLASNNSGTEESPPSLPVTTEKLAVSKMPQTNTSSETPKPGNQGVGSDMRYPRRASLLKFLEKRKERVNARGPYQMNNLKPEGSSSGGEPEDQCSKQFDLNF.

A disordered region spans residues 1–24; the sequence is MSSFPNTVAEGRRSGKAPEKSTFS. Over residues 10–19 the composition is skewed to basic and acidic residues; sequence EGRRSGKAPE. Residues 96-131 enclose the Tify domain; sequence PGPESPQLTIFYAGKMLVFDAFPPEKATEVMEMATK. 2 stretches are compositionally biased toward polar residues: residues 133-142 and 158-167; these read ASNNSGTEES and MPQTNTSSET. Residues 133–232 are disordered; sequence ASNNSGTEES…QCSKQFDLNF (100 aa). A Nuclear localization signal motif is present at residues 182 to 189; it reads PRRASLLK. The Jas motif lies at 183-205; it reads RRASLLKFLEKRKERVNARGPYQ. Residues 190-199 are compositionally biased toward basic and acidic residues; it reads FLEKRKERVN.

This sequence belongs to the TIFY/JAZ family. (Microbial infection) Interacts with the pathogenic Pseudomonas syringae HopZ1a protein; this interaction leads to its degradation. Post-translationally, ubiquitinated. Targeted for degradation by the SCF(COI1) E3 ubiquitin ligase-proteasome pathway during jasmonate signaling. (Microbial infection) Acetylated by Pseudomonas syringae HopZ1a. As to expression, mostly expressed in leaves and flowers and, to a lower extent, in grean pods and roots.

The protein localises to the nucleus. It localises to the cell membrane. Its function is as follows. Repressor of jasmonate responses. The chain is Jasmonate ZIM domain-containing protein 1 from Glycine max (Soybean).